Reading from the N-terminus, the 251-residue chain is NADPH-dependent oxidoreductase (251 aa).

This sequence belongs to the flavin oxidoreductase frp family. Requires FMN as cofactor.

In terms of biological role, reduces FMN, organic nitro compounds and disulfide DTNB. Involved in maintenance of the cellular redox state and the disulfide stress response. The polypeptide is NADPH-dependent oxidoreductase (nfrA) (Staphylococcus saprophyticus subsp. saprophyticus (strain ATCC 15305 / DSM 20229 / NCIMB 8711 / NCTC 7292 / S-41)).